We begin with the raw amino-acid sequence, 359 residues long: Guanine nucleotide-binding protein subunit alpha-11 (359 aa).

Residues Cys-9 and Cys-10 are each lipidated (S-palmitoyl cysteine). In terms of domain architecture, G-alpha spans 38-359 (RELKLLLLGT…QLNLKEYNLV (322 aa)). The segment at 41 to 54 (KLLLLGTGESGKST) is G1 motif. Residues 46-53 (GTGESGKS) and 180-183 (LRVR) each bind GTP. Ser-53 is a binding site for Mg(2+). The G2 motif stretch occupies residues 178–186 (DVLRVRVPT). Thr-186 is a Mg(2+) binding site. A G3 motif region spans residues 201–210 (FRMVDVGGQR). Residues 270–277 (ILFLNKKD) form a G4 motif region. GTP-binding positions include 274 to 277 (NKKD) and Ala-331. The G5 motif stretch occupies residues 329–334 (TCATDT).

The protein belongs to the G-alpha family. G(q) subfamily. In terms of assembly, g proteins are composed of 3 units; alpha, beta and gamma. The alpha chain contains the guanine nucleotide binding site. Interacts with RGS22. Interacts with NTSR1.

The protein localises to the cell membrane. The protein resides in the cytoplasm. The enzyme catalyses GTP + H2O = GDP + phosphate + H(+). Its function is as follows. Guanine nucleotide-binding proteins (G proteins) function as transducers downstream of G protein-coupled receptors (GPCRs) in numerous signaling cascades. The alpha chain contains the guanine nucleotide binding site and alternates between an active, GTP-bound state and an inactive, GDP-bound state. Signaling by an activated GPCR promotes GDP release and GTP binding. The alpha subunit has a low GTPase activity that converts bound GTP to GDP, thereby terminating the signal. Both GDP release and GTP hydrolysis are modulated by numerous regulatory proteins. Signaling is mediated via phospholipase C-beta-dependent inositol lipid hydrolysis for signal propagation: activates phospholipase C-beta: following GPCR activation, GNA11 activates PLC-beta (PLCB1, PLCB2, PLCB3 or PLCB4), leading to production of diacylglycerol (DAG) and inositol 1,4,5-trisphosphate (IP3). Transduces FFAR4 signaling in response to long-chain fatty acids (LCFAs). Together with GNAQ, required for heart development. In the respiratory epithelium, transmits OXGR1-dependent signals that lead to downstream intracellular Ca(2+) release and mucocilliary clearance of airborne pathogens. The sequence is that of Guanine nucleotide-binding protein subunit alpha-11 (Gna11) from Rattus norvegicus (Rat).